Reading from the N-terminus, the 246-residue chain is DNA repair protein RecO (246 aa).

Belongs to the RecO family.

In terms of biological role, involved in DNA repair and RecF pathway recombination. In Bifidobacterium adolescentis (strain ATCC 15703 / DSM 20083 / NCTC 11814 / E194a), this protein is DNA repair protein RecO.